The chain runs to 249 residues: MSPAPSRPRIRPWLVVGDLALAAAWVCAGALVKLLVYGGLGLGGRPEAEAVKVSLSLVYMFLFAWLEAASGGASYNPLTVLAAALASHGGPAVYLFTAFARIPAQVIGAVLGVKLIQVTFPNVGKGARLSVGAHHGALAEGLATFMVVMVSVTLKKKEMKSFFMKTWITSIWKNTIHLLSSDITGGIMNPASAFAWAYARGDHTTFDHLLVYWLAPLQATLLGVWAVTFFTKPKKIKEQKVDENKIKKE.

Helical transmembrane passes span 12–32 (PWLV…GALV) and 53–73 (VSLS…SGGA). Residues 76–78 (NPL) carry the NPA 1 motif. Helical transmembrane passes span 104–124 (AQVI…PNVG), 133–155 (AHHG…VTLK), 176–196 (IHLL…AFAW), and 210–230 (LVYW…VTFF). An NPA 2 motif is present at residues 189-191 (NPA).

The protein belongs to the MIP/aquaporin (TC 1.A.8) family. SIP (TC 1.A.8.10) subfamily.

It is found in the membrane. In terms of biological role, aquaporins facilitate the transport of water and small neutral solutes across cell membranes. The polypeptide is Aquaporin SIP2-1 (SIP2-1) (Zea mays (Maize)).